Here is a 398-residue protein sequence, read N- to C-terminus: Lipase member N (398 aa).

A signal peptide spans 1–18; the sequence is MMWLLLTTTCLICGTLNA. The AB hydrolase-1 domain maps to 79–379; it reads PVVYMQHALF…DWNHFDFVWG (301 aa). Ser173 serves as the catalytic Nucleophile. An intrachain disulfide couples Cys247 to Cys256. Asn272 carries an N-linked (GlcNAc...) asparagine glycan. Catalysis depends on charge relay system residues Asp344 and His373.

Belongs to the AB hydrolase superfamily. Lipase family. In terms of tissue distribution, highly expressed in the epidermis in the granular keratinocytes. Also detected in other tissues, although at much lower levels, including lung and spleen.

It is found in the secreted. The catalysed reaction is a sterol ester + H2O = a sterol + a fatty acid + H(+). It catalyses the reaction a triacylglycerol + H2O = a 1,2-diacylglycerol + a fatty acid + H(+). It carries out the reaction a triacylglycerol + H2O = a diacylglycerol + a fatty acid + H(+). The enzyme catalyses a cholesterol ester + H2O = cholesterol + a fatty acid + H(+). In terms of biological role, plays a highly specific role in the last step of keratinocyte differentiation. Contains two distinct domains: the alpha/beta hydrolase fold and the abhydrolase-associated lipase region, also features the consensus sequence of the active site of a genuine lipase. May have an essential function in lipid metabolism of the most differentiated epidermal layers. This chain is Lipase member N (LIPN), found in Homo sapiens (Human).